Reading from the N-terminus, the 84-residue chain is Sulfur carrier protein TusA (84 aa).

Catalysis depends on cysteine 19, which acts as the Cysteine persulfide intermediate.

Belongs to the sulfur carrier protein TusA family. As to quaternary structure, interacts with IscS.

The protein localises to the cytoplasm. It functions in the pathway tRNA modification. In terms of biological role, sulfur carrier protein involved in sulfur trafficking in the cell. Part of a sulfur-relay system required for 2-thiolation during synthesis of 2-thiouridine of the modified wobble base 5-methylaminomethyl-2-thiouridine (mnm(5)s(2)U) in tRNA. Interacts with IscS and stimulates its cysteine desulfurase activity. Accepts an activated sulfur from IscS, which is then transferred to TusD, and thus determines the direction of sulfur flow from IscS to 2-thiouridine formation. Also appears to be involved in sulfur transfer for the biosynthesis of molybdopterin. The polypeptide is Sulfur carrier protein TusA (Sodalis glossinidius (strain morsitans)).